The following is a 31-amino-acid chain: Cytochrome b6-f complex subunit 6 (31 aa).

The helical transmembrane segment at 4–24 threads the bilayer; sequence ITSYFGFLLAALTITSAIFIG.

This sequence belongs to the PetL family. The 4 large subunits of the cytochrome b6-f complex are cytochrome b6, subunit IV (17 kDa polypeptide, PetD), cytochrome f and the Rieske protein, while the 4 small subunits are PetG, PetL, PetM and PetN. The complex functions as a dimer.

The protein localises to the plastid. The protein resides in the chloroplast thylakoid membrane. Component of the cytochrome b6-f complex, which mediates electron transfer between photosystem II (PSII) and photosystem I (PSI), cyclic electron flow around PSI, and state transitions. PetL is important for photoautotrophic growth as well as for electron transfer efficiency and stability of the cytochrome b6-f complex. This is Cytochrome b6-f complex subunit 6 from Ficus carica (Common fig).